Here is a 128-residue protein sequence, read N- to C-terminus: Aspartate 1-decarboxylase (128 aa).

Residue serine 25 is the Schiff-base intermediate with substrate; via pyruvic acid of the active site. Serine 25 is subject to Pyruvic acid (Ser). Threonine 57 contacts substrate. The active-site Proton donor is the tyrosine 58. 73–75 contacts substrate; it reads GSA.

This sequence belongs to the PanD family. As to quaternary structure, heterooctamer of four alpha and four beta subunits. Pyruvate is required as a cofactor. Post-translationally, is synthesized initially as an inactive proenzyme, which is activated by self-cleavage at a specific serine bond to produce a beta-subunit with a hydroxyl group at its C-terminus and an alpha-subunit with a pyruvoyl group at its N-terminus.

Its subcellular location is the cytoplasm. It carries out the reaction L-aspartate + H(+) = beta-alanine + CO2. Its pathway is cofactor biosynthesis; (R)-pantothenate biosynthesis; beta-alanine from L-aspartate: step 1/1. In terms of biological role, catalyzes the pyruvoyl-dependent decarboxylation of aspartate to produce beta-alanine. This Burkholderia thailandensis (strain ATCC 700388 / DSM 13276 / CCUG 48851 / CIP 106301 / E264) protein is Aspartate 1-decarboxylase.